The primary structure comprises 250 residues: Putative inactive flavonol synthase 2 (250 aa).

Residues 171 to 250 (TEYVMRINNY…EQWKVQECVA (80 aa)) enclose the Fe2OG dioxygenase domain. Residues H195 and D197 each contribute to the Fe cation site.

Belongs to the iron/ascorbate-dependent oxidoreductase family.

The protein is Putative inactive flavonol synthase 2 (FLS2) of Arabidopsis thaliana (Mouse-ear cress).